The sequence spans 461 residues: MWQFRIFLLFASTWGISGVSAHPDPVFSSSEGAHQVLRVRRANSFLEEVRAGSLERECMEEICDFEEAQEIFQNVEDTLAFWIKYFDGDQCSTPPLDHQCDSPCCGHGTCIDGLGGFSCSCDKGWEGRFCQQEMGFQDCRVKNGGCYHYCLEETRGRRCRCAPGYELADDHMHCRPTVNFPCGKLWKRTDKKRKNFKRDIDPEDEELELGPRIVNGTLTKQGDSPWQAILLDSKKKLACGGVLIHTSWVLTAAHCLESSKKLTVRLGEYDLRRRDPWELDLDIKEVLVHPNYTRSNSDNDIALLRLSQPATLSKTIVPICLPNSGLAQELSQAGQETVVTGWGYQSDKVKDGRRNRTFILTFIRIPLAARNDCMQVMNNVVSENMLCAGIIGDTRDACDGDSGGPMVVFFRGTWFLVGLVSWGEGCGHLNNYGVYTKVGSYLKWIHSYIGERDVSLKSPKL.

The first 18 residues, 1–18 (MWQFRIFLLFASTWGISG), serve as a signal peptide directing secretion. A propeptide spanning residues 19 to 41 (VSAHPDPVFSSSEGAHQVLRVRR) is cleaved from the precursor. The 46-residue stretch at 42–87 (ANSFLEEVRAGSLERECMEEICDFEEAQEIFQNVEDTLAFWIKYFD) folds into the Gla domain. 4-carboxyglutamate occurs at positions 47, 48, 55, 57, 60, 61, 66, 67, 70, and 76. C58 and C63 are disulfide-bonded. Disulfide bonds link C91-C110, C100-C105, C104-C119, C121-C130, C139-C150, C146-C159, C161-C174, C182-C320, and C239-C255. 2 EGF-like domains span residues 96–131 (LDHQ…RFCQ) and 135–175 (GFQD…MHCR). The residue at position 112 (D112) is a (3R)-3-hydroxyaspartate. The region spanning 213-450 (IVNGTLTKQG…YLKWIHSYIG (238 aa)) is the Peptidase S1 domain. N-linked (GlcNAc...) asparagine glycosylation occurs at N215. The Charge relay system role is filled by H254. N-linked (GlcNAc...) asparagine glycosylation occurs at N291. The active-site Charge relay system is the D300. An N-linked (GlcNAc...) asparagine glycan is attached at N355. Cystine bridges form between C373/C387 and C398/C426. The active-site Charge relay system is S402.

This sequence belongs to the peptidase S1 family. Synthesized as a single chain precursor, which is cleaved into a light chain and a heavy chain held together by a disulfide bond. The enzyme is then activated by thrombin, which cleaves a tetradecapeptide from the amino end of the heavy chain; this reaction, which occurs at the surface of endothelial cells, is strongly promoted by thrombomodulin. Post-translationally, the vitamin K-dependent, enzymatic carboxylation of some Glu residues allows the modified protein to bind calcium. In terms of processing, the iron and 2-oxoglutarate dependent 3-hydroxylation of aspartate and asparagine is (R) stereospecific within EGF domains. As to expression, plasma; synthesized in the liver.

It is found in the secreted. The protein localises to the golgi apparatus. It localises to the endoplasmic reticulum. The catalysed reaction is Degradation of blood coagulation factors Va and VIIIa.. Functionally, protein C is a vitamin K-dependent serine protease that regulates blood coagulation by inactivating factors Va and VIIIa in the presence of calcium ions and phospholipids. Exerts a protective effect on the endothelial cell barrier function. The protein is Vitamin K-dependent protein C (Proc) of Rattus norvegicus (Rat).